The following is a 429-amino-acid chain: Adenylosuccinate synthetase (429 aa).

Residues 12–18 and 40–42 contribute to the GTP site; these read GDEGKGK and GHT. Asp-13 functions as the Proton acceptor in the catalytic mechanism. Positions 13 and 40 each coordinate Mg(2+). Residues 13-16, 38-41, Thr-128, Arg-142, Gln-223, Thr-238, and Arg-302 contribute to the IMP site; these read DEGK and NAGH. The active-site Proton donor is the His-41. Residue 298–304 coordinates substrate; the sequence is VNTGRKR. Residues Arg-304, 330–332, and 412–414 each bind GTP; these read KLD and GVG.

The protein belongs to the adenylosuccinate synthetase family. As to quaternary structure, homodimer. Mg(2+) is required as a cofactor.

The protein localises to the cytoplasm. It catalyses the reaction IMP + L-aspartate + GTP = N(6)-(1,2-dicarboxyethyl)-AMP + GDP + phosphate + 2 H(+). It participates in purine metabolism; AMP biosynthesis via de novo pathway; AMP from IMP: step 1/2. In terms of biological role, plays an important role in the de novo pathway of purine nucleotide biosynthesis. Catalyzes the first committed step in the biosynthesis of AMP from IMP. The sequence is that of Adenylosuccinate synthetase from Corynebacterium jeikeium (strain K411).